Here is a 115-residue protein sequence, read N- to C-terminus: Large ribosomal subunit protein bL19 (115 aa).

The protein belongs to the bacterial ribosomal protein bL19 family.

Its function is as follows. This protein is located at the 30S-50S ribosomal subunit interface and may play a role in the structure and function of the aminoacyl-tRNA binding site. This Streptococcus mutans serotype c (strain ATCC 700610 / UA159) protein is Large ribosomal subunit protein bL19.